A 217-amino-acid polypeptide reads, in one-letter code: Probable transaldolase (217 aa).

The active-site Schiff-base intermediate with substrate is the lysine 83.

Belongs to the transaldolase family. Type 3B subfamily.

The protein resides in the cytoplasm. The catalysed reaction is D-sedoheptulose 7-phosphate + D-glyceraldehyde 3-phosphate = D-erythrose 4-phosphate + beta-D-fructose 6-phosphate. Its pathway is carbohydrate degradation; pentose phosphate pathway; D-glyceraldehyde 3-phosphate and beta-D-fructose 6-phosphate from D-ribose 5-phosphate and D-xylulose 5-phosphate (non-oxidative stage): step 2/3. Functionally, transaldolase is important for the balance of metabolites in the pentose-phosphate pathway. The polypeptide is Probable transaldolase (Paracoccus denitrificans (strain Pd 1222)).